Here is a 792-residue protein sequence, read N- to C-terminus: Phenylalanine--tRNA ligase beta subunit (792 aa).

The tRNA-binding domain occupies 39 to 150; it reads GDEITNVVTG…ENTPIGKDIK (112 aa). Residues 404–479 form the B5 domain; that stretch reads SEPNIVEVDY…RIYGYNKVPS (76 aa). 4 residues coordinate Mg(2+): aspartate 457, aspartate 463, glutamate 466, and glutamate 467. The 94-residue stretch at 699–792 folds into the FDX-ACB domain; sequence PKFPTVTRDI…LEHVLGAELR (94 aa).

It belongs to the phenylalanyl-tRNA synthetase beta subunit family. Type 1 subfamily. As to quaternary structure, tetramer of two alpha and two beta subunits. The cofactor is Mg(2+).

It is found in the cytoplasm. It catalyses the reaction tRNA(Phe) + L-phenylalanine + ATP = L-phenylalanyl-tRNA(Phe) + AMP + diphosphate + H(+). The polypeptide is Phenylalanine--tRNA ligase beta subunit (Clostridium acetobutylicum (strain ATCC 824 / DSM 792 / JCM 1419 / IAM 19013 / LMG 5710 / NBRC 13948 / NRRL B-527 / VKM B-1787 / 2291 / W)).